Reading from the N-terminus, the 441-residue chain is MSGSPYASPSEADTDAMLDAVGVDRVDELFDIPPEVSFDGEFGIDAKSEQAALRGVRRRLSDNDDLTEFLGRGHYEHYVPSLVDSVSQRSEFITSYTQYQPEITQGFLQVLFEYQSLLVELTGLGVANCSMYDAATALAEAALLAKRVRAADGNRVLVPGFVRDSHVDVLRNYTSGSDVVVERYATDAGNVDLDALEAAMDADVVMVYAENPTTCGTVEEQLCAVGDLADSHDALFCLGSDPVAMSILQRPVDVGADVVVGDASVLGMPTSYGTGLGVFATRKEFLRQVPGRLVGASEDDAGTRAFTLTLQTREQHIRKERATSNICTNQAWVALRAAIHAAWLGADGLVDLAERMVELPRDLAARLDDVSGVTAPVHDDRHHIREFQARTEQPAPAVASALEAEGFGVHAVDDHTIQVCVTDANEHATDAFVAAVREVSE.

The protein belongs to the GcvP family. N-terminal subunit subfamily. As to quaternary structure, the glycine cleavage system is composed of four proteins: P, T, L and H. In this organism, the P 'protein' is a heterodimer of two subunits.

The catalysed reaction is N(6)-[(R)-lipoyl]-L-lysyl-[glycine-cleavage complex H protein] + glycine + H(+) = N(6)-[(R)-S(8)-aminomethyldihydrolipoyl]-L-lysyl-[glycine-cleavage complex H protein] + CO2. In terms of biological role, the glycine cleavage system catalyzes the degradation of glycine. The P protein binds the alpha-amino group of glycine through its pyridoxal phosphate cofactor; CO(2) is released and the remaining methylamine moiety is then transferred to the lipoamide cofactor of the H protein. This chain is Probable glycine dehydrogenase (decarboxylating) subunit 1, found in Halobacterium salinarum (strain ATCC 700922 / JCM 11081 / NRC-1) (Halobacterium halobium).